We begin with the raw amino-acid sequence, 289 residues long: Protoheme IX farnesyltransferase 2 (289 aa).

A run of 9 helical transmembrane segments spans residues 4 to 24 (PGIIFGNLISVAGGFLLAAKG), 28 to 48 (LVLMLASLVGLSLVVASGCAI), 66 to 86 (RVTVTGEIAVGNVLAFGLALG), 99 to 118 (ALALLFAVIGYIVYVGVYSL), 124 to 144 (SVYGTLVGSFSGAVPPVVGYC), 155 to 175 (AILLLMFSLWQMPHSYAIAIF), 199 to 219 (LHIVLYIAVFALVSALLPLAG), 221 to 241 (TGIAFMAVTCATSLWWLAMAL), and 256 to 276 (QVFGFSIITITALSVTMALDF).

The protein belongs to the UbiA prenyltransferase family. Protoheme IX farnesyltransferase subfamily.

It localises to the cell inner membrane. The enzyme catalyses heme b + (2E,6E)-farnesyl diphosphate + H2O = Fe(II)-heme o + diphosphate. It participates in porphyrin-containing compound metabolism; heme O biosynthesis; heme O from protoheme: step 1/1. Its function is as follows. Converts heme B (protoheme IX) to heme O by substitution of the vinyl group on carbon 2 of heme B porphyrin ring with a hydroxyethyl farnesyl side group. The protein is Protoheme IX farnesyltransferase 2 of Shewanella baltica (strain OS195).